The following is a 603-amino-acid chain: DNA mismatch repair protein MutL (603 aa).

The span at 336–346 shows a compositional bias: basic and acidic residues; that stretch reads EVSKKQKEQQK. The interval 336-372 is disordered; it reads EVSKKQKEQQKSEQIQMSFEENRQPKEPPTLFSKPNI.

Belongs to the DNA mismatch repair MutL/HexB family.

Functionally, this protein is involved in the repair of mismatches in DNA. It is required for dam-dependent methyl-directed DNA mismatch repair. May act as a 'molecular matchmaker', a protein that promotes the formation of a stable complex between two or more DNA-binding proteins in an ATP-dependent manner without itself being part of a final effector complex. This is DNA mismatch repair protein MutL from Listeria innocua serovar 6a (strain ATCC BAA-680 / CLIP 11262).